Consider the following 208-residue polypeptide: MSKILKIQYLKLYNVISCFLWMSVLLRTGLIWGITKDTAVVFHETNTLVRWVQTLAIAEVFHSIFGLVSSSPLTTIIQVASRLYLVWGVCYPFSYVIEGSPIYLSMIIAWSITEIIRYAFYAFNLNGDIPAFLTWLRYNTFLILYPIGAGSEFLLVLKSRIAAQYVWSLNKLLWPILMSIYPPGLYIMYTHMLAQRRKISKRAAARRT.

Residues M1–K11 are Cytoplasmic-facing. The chain crosses the membrane as a helical span at residues L12–T35. Over K36–N46 the chain is Lumenal. The chain crosses the membrane as a helical span at residues T47–L67. The Cytoplasmic segment spans residues V68 to Q78. A helical transmembrane segment spans residues V79 to I97. Topologically, residues E98–I102 are lumenal. The helical transmembrane segment at Y103–F123 threads the bilayer. Topologically, residues N124–T134 are cytoplasmic. A helical transmembrane segment spans residues W135–L157. Residues Y145 and E152 contribute to the active site. The Lumenal portion of the chain corresponds to K158 to K171. A helical transmembrane segment spans residues L172–M192. Over L193–T208 the chain is Cytoplasmic.

The protein belongs to the very long-chain fatty acids dehydratase HACD family.

It localises to the endoplasmic reticulum membrane. The enzyme catalyses a very-long-chain (3R)-3-hydroxyacyl-CoA = a very-long-chain (2E)-enoyl-CoA + H2O. Its pathway is lipid metabolism; fatty acid biosynthesis. Its function is as follows. Catalyzes the third of the four reactions of the long-chain fatty acids elongation cycle. This endoplasmic reticulum-bound enzymatic process, allows the addition of two carbons to the chain of long- and very long-chain fatty acids/VLCFAs per cycle. This enzyme catalyzes the dehydration of the 3-hydroxyacyl-CoA intermediate into trans-2,3-enoyl-CoA, within each cycle of fatty acid elongation. Thereby, it participates in the production of VLCFAs of different chain lengths that are involved in multiple biological processes as precursors of membrane lipids and lipid mediators. The polypeptide is Probable very-long-chain (3R)-3-hydroxyacyl-CoA dehydratase (Schizosaccharomyces pombe (strain 972 / ATCC 24843) (Fission yeast)).